Consider the following 421-residue polypeptide: Isocitrate dehydrogenase [NADP], mitochondrial (421 aa).

The N-terminal 8 residues, Ala1–Tyr8, are a transit peptide targeting the mitochondrion. N6-acetyllysine occurs at positions 14, 17, 36, and 38. N6-acetyllysine; alternate is present on residues Lys49 and Lys75. Residues Lys49 and Lys75 each carry the N6-succinyllysine; alternate modification. NADP(+)-binding positions include Thr84–Thr86 and Arg91. Residue Thr86 coordinates D-threo-isocitrate. Residues Ser103–Arg109 and Arg118 each bind D-threo-isocitrate. Lys124 is modified (N6-acetyllysine). Residue Lys135 is modified to N6-acetyllysine; alternate. Lys135 is modified (N6-succinyllysine; alternate). Arg141 contributes to the D-threo-isocitrate binding site. N6-acetyllysine; alternate occurs at positions 149 and 162. Residues Lys149 and Lys162 each carry the N6-succinyllysine; alternate modification. Lys168 is modified (N6-acetyllysine). Residue Lys225 is modified to N6-acetyllysine; alternate. Lys225 bears the N6-succinyllysine; alternate mark. Lys232, Lys241, Lys244, and Lys249 each carry N6-acetyllysine. An N6-acetyllysine; alternate modification is found at Lys251. N6-succinyllysine; alternate is present on Lys251. Asp260 lines the Mn(2+) pocket. NADP(+) is bound at residue Lys268. Asp283 contacts Mn(2+). Residues Gly318–His323 and Asn336 contribute to the NADP(+) site. The residue at position 353 (Lys353) is an N6-acetyllysine; alternate. Position 353 is an N6-succinyllysine; alternate (Lys353). Residues Lys369, Lys382, and Lys411 each carry the N6-acetyllysine modification.

The protein belongs to the isocitrate and isopropylmalate dehydrogenases family. Homodimer. Mg(2+) is required as a cofactor. It depends on Mn(2+) as a cofactor. In terms of processing, acetylation at Lys-382 dramatically reduces catalytic activity. Deacetylated by SIRT3.

It is found in the mitochondrion. It catalyses the reaction D-threo-isocitrate + NADP(+) = 2-oxoglutarate + CO2 + NADPH. Its function is as follows. Plays a role in intermediary metabolism and energy production. It may tightly associate or interact with the pyruvate dehydrogenase complex. This is Isocitrate dehydrogenase [NADP], mitochondrial (IDH2) from Sus scrofa (Pig).